A 132-amino-acid polypeptide reads, in one-letter code: Small ribosomal subunit protein uS8 (132 aa).

It belongs to the universal ribosomal protein uS8 family. In terms of assembly, part of the 30S ribosomal subunit. Contacts proteins S5 and S12.

In terms of biological role, one of the primary rRNA binding proteins, it binds directly to 16S rRNA central domain where it helps coordinate assembly of the platform of the 30S subunit. The sequence is that of Small ribosomal subunit protein uS8 from Streptomyces avermitilis (strain ATCC 31267 / DSM 46492 / JCM 5070 / NBRC 14893 / NCIMB 12804 / NRRL 8165 / MA-4680).